The chain runs to 874 residues: Protein Son (874 aa).

3 disordered regions span residues 1 to 45 (MTEN…ERPD), 68 to 98 (RRSN…NIKP), and 120 to 368 (ELLD…SRDL). Over residues 12-24 (ETPQVAGSQTNPP) the composition is skewed to polar residues. The segment covering 70–89 (SNSNELGNNDESGESESSAS) has biased composition (low complexity). 2 stretches are compositionally biased toward basic residues: residues 128 to 147 (KKKK…KKKT) and 162 to 175 (KHKH…HKDI). Composition is skewed to basic and acidic residues over residues 176-219 (RVKD…KDKF) and 226-277 (SEKE…ERVR). Residues 705–751 (TGGMGMALLQKMGWKPGEGLGRCKTGSLQPLLLDVKLDKRGLVSRDD) enclose the G-patch domain. The 71-residue stretch at 800 to 870 (HPVCVLNELT…AALCLRSLGI (71 aa)) folds into the DRBM domain.

As to expression, expressed in ovarian nurse cells (at protein level).

It is found in the nucleus. In terms of biological role, RNA-binding protein that protects nascent transcripts containing intronic transposable sequences, known as INE-1, from being degraded by DIP1. Modulates DIP1 activity by repressing its sumoylation levels. This ensures that intronic sequences will be degradated only after splicing. In the ovaries, regulates germline stem cells (GSCs) self-renewal by repressing the expression of the GSC differentiation-promoting factor Rga. The polypeptide is Protein Son (Drosophila melanogaster (Fruit fly)).